The following is a 259-amino-acid chain: Short-chain dehydrogenase reductase 5 (259 aa).

12–36 (IITGGASGIGAEAARLFTDHGAKVV) lines the NAD(+) pocket. Residue S144 participates in substrate binding. The active-site Proton acceptor is Y157.

Belongs to the short-chain dehydrogenases/reductases (SDR) family.

The sequence is that of Short-chain dehydrogenase reductase 5 (SDR5) from Arabidopsis thaliana (Mouse-ear cress).